We begin with the raw amino-acid sequence, 180 residues long: CDP-archaeol synthase (180 aa).

Transmembrane regions (helical) follow at residues 5-25 (LVAT…AAVL), 54-74 (AVGT…AEPA), 78-98 (LGVD…FGAM), 118-138 (AFPG…VFVV), and 142-162 (WALA…TPIL).

The protein belongs to the CDP-archaeol synthase family. Requires Mg(2+) as cofactor.

Its subcellular location is the cell membrane. It catalyses the reaction 2,3-bis-O-(geranylgeranyl)-sn-glycerol 1-phosphate + CTP + H(+) = CDP-2,3-bis-O-(geranylgeranyl)-sn-glycerol + diphosphate. The protein operates within membrane lipid metabolism; glycerophospholipid metabolism. In terms of biological role, catalyzes the formation of CDP-2,3-bis-(O-geranylgeranyl)-sn-glycerol (CDP-archaeol) from 2,3-bis-(O-geranylgeranyl)-sn-glycerol 1-phosphate (DGGGP) and CTP. This reaction is the third ether-bond-formation step in the biosynthesis of archaeal membrane lipids. The polypeptide is CDP-archaeol synthase (Halorubrum lacusprofundi (strain ATCC 49239 / DSM 5036 / JCM 8891 / ACAM 34)).